Reading from the N-terminus, the 602-residue chain is Probable translation initiation factor IF-2 (602 aa).

One can recognise a tr-type G domain in the interval 18-233 (LRTPIVCVMG…LVGLAQRFLK (216 aa)). A G1 region spans residues 27 to 34 (GHVDHGKT). Residue 27-34 (GHVDHGKT) participates in GTP binding. Residues 52–56 (AITQH) are G2. The interval 88–91 (DTPG) is G3. Residues 88-92 (DTPGH) and 142-145 (NKID) contribute to the GTP site. The tract at residues 142 to 145 (NKID) is G4. Residues 210–212 (SAI) are G5.

Belongs to the TRAFAC class translation factor GTPase superfamily. Classic translation factor GTPase family. IF-2 subfamily.

Its function is as follows. Function in general translation initiation by promoting the binding of the formylmethionine-tRNA to ribosomes. Seems to function along with eIF-2. The polypeptide is Probable translation initiation factor IF-2 (Methanothrix thermoacetophila (strain DSM 6194 / JCM 14653 / NBRC 101360 / PT) (Methanosaeta thermophila)).